Reading from the N-terminus, the 906-residue chain is Catenin alpha-1 (906 aa).

T2 is subject to N-acetylthreonine. An involved in homodimerization region spans residues T2 to C228. K57 is covalently cross-linked (Glycyl lysine isopeptide (Lys-Gly) (interchain with G-Cter in SUMO2)). The interaction with JUP and CTNNB1 stretch occupies residues V97–Y148. Phosphoserine occurs at positions 264, 295, and 297. Residues T325–F394 are interaction with alpha-actinin. Residue T634 is modified to Phosphothreonine. The residue at position 641 (S641) is a Phosphoserine. Residue T645 is modified to Phosphothreonine. Phosphoserine occurs at positions 652 and 655. T658 carries the phosphothreonine modification. K797 participates in a covalent cross-link: Glycyl lysine isopeptide (Lys-Gly) (interchain with G-Cter in SUMO2). Position 851 is a phosphoserine (S851). Positions P864–T880 are enriched in basic and acidic residues. The disordered stretch occupies residues P864–V894. Basic residues predominate over residues K881–V891.

It belongs to the vinculin/alpha-catenin family. Monomer and homodimer; the monomer preferentially binds to CTNNB1 and the homodimer to actin. Component of an cadherin:catenin adhesion complex composed of at least of CDH26, beta-catenin/CTNNB1, alpha-catenin/CTNNA1 and p120 catenin/CTNND1. Possible component of an E-cadherin/ catenin adhesion complex together with E-cadherin/CDH1 and beta-catenin/CTNNB1 or gamma-catenin/JUP; the complex is located to adherens junctions. The stable association of CTNNA1 is controversial as CTNNA1 was shown not to bind to F-actin when assembled in the complex. Alternatively, the CTNNA1-containing complex may be linked to F-actin by other proteins such as LIMA1. Binds AFDN and F-actin. Interacts with LIMA1. Interacts with ARHGAP21. Interacts with AJUBA. Interacts with vinculin/VCL. Interacts with TJP2/ZO2 (via N-terminus). Interacts with TJP1/ZO1 (via N-terminus). Post-translationally, sumoylated. In terms of processing, phosphorylation seems to contribute to the strength of cell-cell adhesion rather than to the basic capacity for cell-cell adhesion. As to expression, expressed in cerebellum, heart, liver, small intestine, kidney and placenta (at protein level).

The protein resides in the cytoplasm. The protein localises to the cytoskeleton. It localises to the cell junction. It is found in the adherens junction. Its subcellular location is the cell membrane. The protein resides in the nucleus. Associates with the cytoplasmic domain of a variety of cadherins. The association of catenins to cadherins produces a complex which is linked to the actin filament network, and which seems to be of primary importance for cadherins cell-adhesion properties. Can associate with both E- and N-cadherins. Originally believed to be a stable component of E-cadherin/catenin adhesion complexes and to mediate the linkage of cadherins to the actin cytoskeleton at adherens junctions. In contrast, cortical actin was found to be much more dynamic than E-cadherin/catenin complexes and CTNNA1 was shown not to bind to F-actin when assembled in the complex suggesting a different linkage between actin and adherens junctions components. The homodimeric form may regulate actin filament assembly and inhibit actin branching by competing with the Arp2/3 complex for binding to actin filaments. Involved in the regulation of WWTR1/TAZ, YAP1 and TGFB1-dependent SMAD2 and SMAD3 nuclear accumulation. May play a crucial role in cell differentiation. This is Catenin alpha-1 from Mus musculus (Mouse).